Consider the following 131-residue polypeptide: Snaclec bitiscetin subunit alpha (131 aa).

3 disulfide bridges follow: cysteine 4–cysteine 15, cysteine 32–cysteine 125, and cysteine 100–cysteine 117. The 116-residue stretch at 11–126 (YKGHCYKVFK…CGEKNPFICK (116 aa)) folds into the C-type lectin domain.

This sequence belongs to the snaclec family. Heterodimer of subunits alpha and beta; disulfide-linked. Expressed by the venom gland.

The protein localises to the secreted. In terms of biological role, snaclec that binds to von Willebrand factor (VWF) and induces its interaction with GPIbalpha (GP1BA) (via the vWF A1 domain), resulting in platelet aggregation. The polypeptide is Snaclec bitiscetin subunit alpha (Bitis arietans (African puff adder)).